Reading from the N-terminus, the 193-residue chain is Molybdenum cofactor guanylyltransferase (193 aa).

GTP is bound by residues Leu8–Gly10, Lys21, Asp67, and Asp98. Residue Asp98 coordinates Mg(2+).

It belongs to the MobA family. Monomer. Requires Mg(2+) as cofactor.

Its subcellular location is the cytoplasm. The enzyme catalyses Mo-molybdopterin + GTP + H(+) = Mo-molybdopterin guanine dinucleotide + diphosphate. Its function is as follows. Transfers a GMP moiety from GTP to Mo-molybdopterin (Mo-MPT) cofactor (Moco or molybdenum cofactor) to form Mo-molybdopterin guanine dinucleotide (Mo-MGD) cofactor. The polypeptide is Molybdenum cofactor guanylyltransferase (Cereibacter sphaeroides (strain ATCC 17029 / ATH 2.4.9) (Rhodobacter sphaeroides)).